The chain runs to 98 residues: Beta-elicitin cinnamomin (98 aa).

Intrachain disulfides connect cysteine 3-cysteine 71, cysteine 27-cysteine 56, and cysteine 51-cysteine 95. The short motif at 33–42 is the Beak-like motif 1 (ligand binding) element; the sequence is YSMLTATALP. The Beak-like motif 2 (ligand binding) signature appears at 72–83; it reads DLTVPTSGLVLD.

Belongs to the elicitin family.

Its subcellular location is the secreted. Functionally, induces local and distal defense responses (incompatible hypersensitive reaction) in plants from the solanaceae and cruciferae families. Elicits leaf necrosis and causes the accumulation of pathogenesis-related proteins. Might interact with the lipidic molecules of the plasma membrane. Elicitins are able to load, carry, and transfer sterols between membranes. In Phytophthora cinnamomi (Cinnamon fungus), this protein is Beta-elicitin cinnamomin.